The following is an 80-amino-acid chain: Exodeoxyribonuclease 7 small subunit (80 aa).

The protein belongs to the XseB family. In terms of assembly, heterooligomer composed of large and small subunits.

Its subcellular location is the cytoplasm. It catalyses the reaction Exonucleolytic cleavage in either 5'- to 3'- or 3'- to 5'-direction to yield nucleoside 5'-phosphates.. Its function is as follows. Bidirectionally degrades single-stranded DNA into large acid-insoluble oligonucleotides, which are then degraded further into small acid-soluble oligonucleotides. The chain is Exodeoxyribonuclease 7 small subunit from Pseudomonas fluorescens (strain Pf0-1).